The following is a 62-amino-acid chain: Large ribosomal subunit protein bL35 (62 aa).

A disordered region spans residues 31-62; that stretch reads HLAQNKTTKQKRQSRKSAQMHSSDLKRFKALI. Basic and acidic residues predominate over residues 53–62; sequence SDLKRFKALI.

Belongs to the bacterial ribosomal protein bL35 family.

This Mycoplasmopsis agalactiae (strain NCTC 10123 / CIP 59.7 / PG2) (Mycoplasma agalactiae) protein is Large ribosomal subunit protein bL35.